Here is a 96-residue protein sequence, read N- to C-terminus: Dynein light chain roadblock-type 1 (96 aa).

Position 2 is an N-acetylalanine (A2).

The protein belongs to the GAMAD family. Homodimer. The cytoplasmic dynein 1 complex consists of two catalytic heavy chains (HCs) and a number of non-catalytic subunits presented by intermediate chains (ICs), light intermediate chains (LICs) and light chains (LCs); the composition seems to vary in respect to the IC, LIC and LC composition. The heavy chain homodimer serves as a scaffold for the probable homodimeric assembly of the respective non-catalytic subunits. The ICs and LICs bind directly to the HC dimer and the LCs assemble on the IC dimer. Interacts with DYNLRB2. Interacts with DYNC1I1 and DYNC1I2. Interacts with RAB6A isoform 1 (GTP-bound); the interaction is direct. Interacts with RAB6A isoform 2 (GDP-bound); the interaction is direct. Interacts with RAB6B (GDP-bound).

Its subcellular location is the cytoplasm. The protein resides in the cytoskeleton. In terms of biological role, acts as one of several non-catalytic accessory components of the cytoplasmic dynein 1 complex that are thought to be involved in linking dynein to cargos and to adapter proteins that regulate dynein function. Cytoplasmic dynein 1 acts as a motor for the intracellular retrograde motility of vesicles and organelles along microtubules. This chain is Dynein light chain roadblock-type 1 (Dynlrb1), found in Mus musculus (Mouse).